Reading from the N-terminus, the 228-residue chain is Superoxide dismutase [Mn], mitochondrial (228 aa).

The transit peptide at 1 to 24 directs the protein to the mitochondrion; that stretch reads MALRTLVSRRTLATGLGFRQQLRG. Mn(2+) contacts are provided by His52, His100, Asp189, and His193.

Belongs to the iron/manganese superoxide dismutase family. Homotetramer. It depends on Mn(2+) as a cofactor.

Its subcellular location is the mitochondrion matrix. The enzyme catalyses 2 superoxide + 2 H(+) = H2O2 + O2. Its function is as follows. Destroys superoxide anion radicals which are normally produced within the cells and which are toxic to biological systems. The protein is Superoxide dismutase [Mn], mitochondrial (SODA) of Nicotiana plumbaginifolia (Leadwort-leaved tobacco).